The chain runs to 185 residues: Peptide deformylase (185 aa).

Cysteine 109 and histidine 152 together coordinate Fe cation. The active site involves glutamate 153. Histidine 156 contributes to the Fe cation binding site.

Belongs to the polypeptide deformylase family. It depends on Fe(2+) as a cofactor.

It catalyses the reaction N-terminal N-formyl-L-methionyl-[peptide] + H2O = N-terminal L-methionyl-[peptide] + formate. Its function is as follows. Removes the formyl group from the N-terminal Met of newly synthesized proteins. Requires at least a dipeptide for an efficient rate of reaction. N-terminal L-methionine is a prerequisite for activity but the enzyme has broad specificity at other positions. The protein is Peptide deformylase of Roseiflexus castenholzii (strain DSM 13941 / HLO8).